Consider the following 218-residue polypeptide: Elongation factor Ts (218 aa).

Residues 82–85 form an involved in Mg(2+) ion dislocation from EF-Tu region; it reads TDFV.

The protein belongs to the EF-Ts family.

It is found in the cytoplasm. Associates with the EF-Tu.GDP complex and induces the exchange of GDP to GTP. It remains bound to the aminoacyl-tRNA.EF-Tu.GTP complex up to the GTP hydrolysis stage on the ribosome. The sequence is that of Elongation factor Ts from Prochlorococcus marinus (strain MIT 9301).